The primary structure comprises 7570 residues: Dystonin (7570 aa).

2 consecutive Calponin-homology (CH) domains span residues 35-138 (KVQK…LHFQ) and 151-255 (MSAK…DAFP). The tract at residues 35-252 (KVQKKTFTKW…VITYVSSLYD (218 aa)) is actin-binding. Leucine 135, lysine 184, serine 236, and serine 237 each carry phosphoserine. 2 Spectrin repeats span residues 602 to 699 (EINM…RHLD) and 701 to 802 (LHNF…QHIK). The region spanning 887–944 (KTSIPIKAICDYRQIEITIYKDDECVLANNSHRAKWKVISPTGNEAMVPSVCFTVPPP) is the SH3 domain. 2 Spectrin repeats span residues 1293 to 1422 (KYYR…KFAG) and 1440 to 1540 (KEHV…QESQ). Residue serine 1382 is modified to Phosphoserine. The Nuclear localization signal; in isoform 6 signature appears at 1383-1389 (PVKRRRM). Glutamate 1565 carries the post-translational modification Phosphoserine. Plectin repeat units lie at residues 1584–1626 (IRLL…QLKE), 1660–1703 (KVLE…LERQ), 1774–1817 (RLLS…LTYQ), 1818–1855 (VQTG…LEAQ), and 1856–1891 (RGYV…KILN). Serine 2229 carries the phosphoserine modification. Disordered regions lie at residues 2317–2346 (SNTS…IEEY), 2383–2441 (LLND…DETA), and 2585–2616 (DYIY…GKPR). A compositionally biased stretch (acidic residues) spans 2336–2345 (DKEDESEIEE). Positions 2385–2394 (NDQQNNTGTD) are enriched in low complexity. Composition is skewed to acidic residues over residues 2395 to 2412 (TDSD…DDDH), 2430 to 2439 (YDTLQEENDE), and 2591 to 2605 (NDQD…DEEG). A Phosphoserine modification is found at serine 2919. A disordered region spans residues 3190 to 3221 (EASTVPSDSQMSDSSGVSPMTNSSELKPESRD). Over residues 3192-3209 (STVPSDSQMSDSSGVSPM) the composition is skewed to low complexity. Spectrin repeat units follow at residues 3395 to 3501 (LQHT…KQIM), 3643 to 3752 (QEYK…KELD), 3926 to 4040 (EKFD…NNLK), 4047 to 4153 (QHYE…EKLQ), 4160 to 4259 (LSVQ…ETLA), 4269 to 4368 (ELFE…EAVT), 4516 to 4621 (QKAQ…QKLE), 4628 to 4732 (TQFQ…DWID), 4742 to 4842 (QSLL…QHLQ), 4849 to 4951 (HQFQ…NKLK), 4958 to 5058 (LKYK…FCLE), 5068 to 5167 (QEVS…SFLE), 5174 to 5277 (GHFQ…EQVE), 5284 to 5388 (EEFY…AQLQ), 5395 to 5497 (GRFQ…RQLE), 5504 to 5715 (QQFH…KTLE), 5831 to 5933 (QQFD…LQLE), 5941 to 6041 (QFWE…VALD), 6048 to 6154 (TQFH…AKLL), 6161 to 6263 (EKFW…DKLE), 6270 to 6373 (VQYQ…HKLE), 6380 to 6482 (GQFQ…QQLD), 6489 to 6591 (KGFH…TKLE), 6598 to 6700 (MEFH…RSLD), 6707 to 6810 (KQFH…NKLE), 6817 to 6918 (GQFT…TRLE), 6925 to 7027 (EEFH…QRLA), and 7037 to 7167 (QELL…RKLN). Serine 3968 bears the Phosphoserine mark. Residue serine 4749 is modified to Phosphoserine. Residue lysine 5470 forms a Glycyl lysine isopeptide (Lys-Gly) (interchain with G-Cter in ubiquitin) linkage. EF-hand domains are found at residues 7197 to 7232 (HKKS…SKFP) and 7233 to 7268 (TSRL…NKDA). Residues aspartate 7210, aspartate 7212, aspartate 7214, lysine 7216, glutamate 7221, aspartate 7246, aspartate 7248, aspartate 7250, tyrosine 7252, and glutamate 7257 each contribute to the Ca(2+) site. Residues 7273–7351 (TDADKIEDEV…EFLVKNDPCR (79 aa)) form the GAR domain. 3 disordered regions span residues 7358 to 7379 (KMLR…AKGR), 7395 to 7452 (SQGM…SKLR), and 7481 to 7570 (QFAD…SSKR). Polar residues predominate over residues 7362 to 7374 (SESNSSITTTQPT). Composition is skewed to low complexity over residues 7411-7441 (SSRG…TTTP) and 7490-7504 (SRPG…GSRA). Phosphoserine is present on serine 7432. Serine 7510, serine 7513, and serine 7525 each carry phosphoserine. Polar residues predominate over residues 7519-7535 (EIQSVCSDVETVPQTHR). Positions 7550-7553 (SKIP) match the Microtubule tip localization signal motif.

In terms of assembly, homodimer. Isoform 1 interacts (via N-terminus) with PLEC (via N-terminus). Interacts with the neuronal intermediate filament protein, PRPH. Interacts with DES. Interacts with SYNE3. Isoform 1 and isoform 6 can homodimerize (via N-terminus). Isoform 1 interacts (via N-terminus) with ACTN2. Isoform 1 interacts (via N-terminus) with PLEC (via N-terminus). Isoform 3 interacts (via N-terminus) with COL17A1 (via cytoplasmic region). Isoform 3 interacts (via N-terminus) with ITGB4 isoform beta-4a (via cytoplasmic region). Isoform 3 interacts (via N-terminus) with ERBIN (via C-terminus). Isoform 3 associates (via C-terminal) with KRT5-KRT14 (via rod region) intermediate filaments of keratins. Interacts with MAPRE1; probably required for targeting to the growing microtubule plus ends. Interacts with TMIGD2. Isoform 9 interacts with TMEM108. In terms of tissue distribution, isoform 1 is expressed in myoblasts (at protein level). Isoform 3 is expressed in the skin. Isoform 6 is expressed in the brain. Highly expressed in skeletal muscle and cultured keratinocytes.

It is found in the cytoplasm. The protein resides in the cytoskeleton. It localises to the stress fiber. The protein localises to the cell projection. Its subcellular location is the axon. It is found in the myofibril. The protein resides in the sarcomere. It localises to the z line. The protein localises to the h zone. Its subcellular location is the cell junction. It is found in the hemidesmosome. The protein resides in the nucleus. It localises to the nucleus envelope. The protein localises to the membrane. Its subcellular location is the endoplasmic reticulum membrane. It is found in the cell cortex. The protein resides in the cell membrane. Cytoskeletal linker protein. Acts as an integrator of intermediate filaments, actin and microtubule cytoskeleton networks. Required for anchoring either intermediate filaments to the actin cytoskeleton in neural and muscle cells or keratin-containing intermediate filaments to hemidesmosomes in epithelial cells. The proteins may self-aggregate to form filaments or a two-dimensional mesh. Regulates the organization and stability of the microtubule network of sensory neurons to allow axonal transport. Mediates docking of the dynein/dynactin motor complex to vesicle cargos for retrograde axonal transport through its interaction with TMEM108 and DCTN1. Functionally, plays a structural role in the assembly of hemidesmosomes of epithelial cells; anchors keratin-containing intermediate filaments to the inner plaque of hemidesmosomes. Required for the regulation of keratinocyte polarity and motility; mediates integrin ITGB4 regulation of RAC1 activity. Its function is as follows. Required for bundling actin filaments around the nucleus. In terms of biological role, regulates the organization and stability of the microtubule network of sensory neurons to allow axonal transport. The chain is Dystonin from Homo sapiens (Human).